We begin with the raw amino-acid sequence, 59 residues long: Large ribosomal subunit protein uL30 (59 aa).

The protein belongs to the universal ribosomal protein uL30 family. In terms of assembly, part of the 50S ribosomal subunit.

This is Large ribosomal subunit protein uL30 from Staphylococcus aureus (strain JH1).